A 310-amino-acid polypeptide reads, in one-letter code: tRNA pseudouridine synthase B (310 aa).

Residue Asp47 is the Nucleophile of the active site.

The protein belongs to the pseudouridine synthase TruB family. Type 1 subfamily.

It carries out the reaction uridine(55) in tRNA = pseudouridine(55) in tRNA. Functionally, responsible for synthesis of pseudouridine from uracil-55 in the psi GC loop of transfer RNAs. The sequence is that of tRNA pseudouridine synthase B from Psychromonas ingrahamii (strain DSM 17664 / CCUG 51855 / 37).